The following is a 522-amino-acid chain: Calcium-dependent protein kinase 14 (522 aa).

Low complexity-rich tracts occupy residues 1–12 (MGNCCPPGSSSE) and 19–45 (SSGS…AAPA). The segment at 1-58 (MGNCCPPGSSSEPDPPPASSGSSRPAGSAGAAASPATISPSAAPAPAKPPAPIGPVLG) is disordered. G2 carries the N-myristoyl glycine lipid modification. Residues 68–326 (YTVGKELGRG…AYDVLNHPWI (259 aa)) form the Protein kinase domain. Residues 74-82 (LGRGQFGVT) and K97 contribute to the ATP site. D192 serves as the catalytic Proton acceptor. An autoinhibitory domain region spans residues 332 to 362 (APDTPLDNAVLGRLKQFRAMNQFKKAALRVI). 4 EF-hand domains span residues 369–404 (EEIR…KGTK), 405–440 (LTEA…MNRM), 441–476 (DREE…KGLM), and 480–511 (EIKD…GDPE). Positions 382, 384, 386, 388, 393, 418, 420, 422, 424, 429, 454, 456, 458, 460, 465, 489, 491, 493, 495, and 500 each coordinate Ca(2+).

This sequence belongs to the protein kinase superfamily. Ser/Thr protein kinase family. CDPK subfamily.

The protein resides in the membrane. It catalyses the reaction L-seryl-[protein] + ATP = O-phospho-L-seryl-[protein] + ADP + H(+). It carries out the reaction L-threonyl-[protein] + ATP = O-phospho-L-threonyl-[protein] + ADP + H(+). Its activity is regulated as follows. Activated by calcium. Autophosphorylation may play an important role in the regulation of the kinase activity. May play a role in signal transduction pathways that involve calcium as a second messenger. The chain is Calcium-dependent protein kinase 14 from Oryza sativa subsp. japonica (Rice).